Here is a 271-residue protein sequence, read N- to C-terminus: Endonuclease V (271 aa).

Residues 46–67 are disordered; sequence TRTGDAPDVDQTTLSTSADDRT. 2 residues coordinate Mg(2+): Asp-76 and Asp-140.

It belongs to the endonuclease V family. Requires Mg(2+) as cofactor.

The protein localises to the cytoplasm. The enzyme catalyses Endonucleolytic cleavage at apurinic or apyrimidinic sites to products with a 5'-phosphate.. DNA repair enzyme involved in the repair of deaminated bases. Selectively cleaves double-stranded DNA at the second phosphodiester bond 3' to a deoxyinosine leaving behind the intact lesion on the nicked DNA. The chain is Endonuclease V from Haloarcula marismortui (strain ATCC 43049 / DSM 3752 / JCM 8966 / VKM B-1809) (Halobacterium marismortui).